The primary structure comprises 386 residues: Patatin group M-3 (386 aa).

The N-terminal stretch at 1–23 (MATTKSFLILFFMILATTSSTCA) is a signal peptide. A PNPLA domain is found at 32–229 (LSIDGGGIKG…TVGDPALLSL (198 aa)). A GXGXXG motif is present at residues 36 to 41 (GGGIKG). The GXSXG signature appears at 75 to 79 (GTSTG). Residue Ser-77 is the Nucleophile of the active site. N-linked (GlcNAc...) asparagine glycosylation is present at Asn-115. The active-site Proton acceptor is Asp-215. A DGA/G motif is present at residues 215 to 217 (DGG). Positions 321–384 (ENALTGTTTE…DRKKLRANKA (64 aa)) form a coiled coil.

It belongs to the patatin family. Tuber.

The protein localises to the vacuole. Functionally, probable lipolytic acyl hydrolase (LAH), an activity which is thought to be involved in the response of tubers to pathogens. In Solanum tuberosum (Potato), this protein is Patatin group M-3.